A 126-amino-acid polypeptide reads, in one-letter code: Fatty acid-binding protein, liver (126 aa).

A2 carries the N-acetylalanine modification.

It belongs to the calycin superfamily. Fatty-acid binding protein (FABP) family. As to expression, liver.

The protein resides in the cytoplasm. In terms of biological role, binds free fatty acids and their coenzyme A derivatives, bilirubin, and some other small molecules in the cytoplasm. May be involved in intracellular lipid transport this L-FABP binds only one fatty acid/molecule. Has more affinity for trans-parinaric acid than for cis-parinaric acid. The polypeptide is Fatty acid-binding protein, liver (fabp1) (Rhamdia sapo (South American catfish)).